Reading from the N-terminus, the 550-residue chain is MKFLKRGVALALLAAFALTTQPAQAYEKDKTYKITILHTNDHHGHFWRSEYGEYGLAAQKTLVDSIRKEVAQEGGSVLLLSGGDINTGVPESDLQDAEPDFRGMNLIGYDAMAVGNHEFDNPLTVLRQQEKWAKFPFLYANIYQKSTGERLFKPWAIFTRQDIKIAVIGLTTDDTAKIGNPEYFTDIEFRKPAEEAKVVIQELNMNEKPDVIIATTHMGHYDNGDHGSNAPGDVEMARSLPAGSLAMIVGGHSQDPVCMASENKKQVNYVPGTPCAPDKQNGIWIVQAHEWGKYVGRADFEFRNGEMKMVNYQLIPVNLKKKVTWDNGKSERVLYTPEIAENPQMLSLLTPFQNKGKAQLEVKIGSVNGLLEGDRSKVRFVQTNMGRVILAAQIARTGADFGVMSGGGIRDSIEAGDITYKSVLKVQPFGNIVVYADMSGKEVVDYLTAVAQMKPDSGAYPQLANVSFVAKEGKLTDLKIKGEPVDPAKTYRMATLSFNATGGDGYPRIDNKPGYVNTGFIDAEVLKEFIQQNSPLDAAAFTPNGEVSWL.

The N-terminal stretch at 1-25 is a signal peptide; that stretch reads MKFLKRGVALALLAAFALTTQPAQA. Positions 41, 43, 84, 116, 217, 252, and 254 each coordinate a divalent metal cation. A disulfide bond links cysteine 258 and cysteine 275. Residues phenylalanine 429 and 498-504 contribute to the substrate site; that span reads FNATGGD.

The protein belongs to the 5'-nucleotidase family. A divalent metal cation serves as cofactor.

Its subcellular location is the periplasm. This chain is Silent protein UshA(0) (ushA), found in Salmonella typhimurium (strain LT2 / SGSC1412 / ATCC 700720).